Reading from the N-terminus, the 399-residue chain is Interferon regulatory factor 9 (399 aa).

Residues 9–116 constitute a DNA-binding region (IRF tryptophan pentad repeat); sequence TRKLRSWIVE…EPYKVYRILP (108 aa). Positions 118-189 are disordered; that stretch reads GTLPNQPRNQ…CNSELEEGAG (72 aa). Polar residues predominate over residues 120-129; the sequence is LPNQPRNQKS. The residue at position 139 (Ser139) is a Phosphoserine. Polar residues predominate over residues 148 to 157; it reads NGRTNGVVNH. The span at 171-189 shows a compositional bias: low complexity; that stretch reads SNRSDSNSNCNSELEEGAG. Ser393 carries the phosphoserine modification.

Belongs to the IRF family. In terms of assembly, interacts with STAT2 in the cytoplasm. Forms the interferon-stimulated gene factor 3 complex (ISGF3) with the heterodimer STAT1:STAT2; upon stimulation.

The protein resides in the nucleus. Functionally, transcription factor that plays an essential role in anti-viral immunity. It mediates signaling by type I IFNs (IFN-alpha and IFN-beta). Following type I IFN binding to cell surface receptors, Jak kinases (TYK2 and JAK1) are activated, leading to tyrosine phosphorylation of STAT1 and STAT2. IRF9/ISGF3G associates with the phosphorylated STAT1:STAT2 dimer to form a complex termed ISGF3 transcription factor, that enters the nucleus. ISGF3 binds to the IFN stimulated response element (ISRE) to activate the transcription of interferon stimulated genes, which drive the cell in an antiviral state. The polypeptide is Interferon regulatory factor 9 (Irf9) (Mus musculus (Mouse)).